The following is a 185-amino-acid chain: Ribosome-recycling factor (185 aa).

This sequence belongs to the RRF family.

The protein localises to the cytoplasm. Its function is as follows. Responsible for the release of ribosomes from messenger RNA at the termination of protein biosynthesis. May increase the efficiency of translation by recycling ribosomes from one round of translation to another. The protein is Ribosome-recycling factor of Streptococcus thermophilus (strain ATCC BAA-491 / LMD-9).